A 207-amino-acid polypeptide reads, in one-letter code: Oligoribonuclease (207 aa).

Positions 20–183 (LVWLDMEMTG…ADIHESIDEL (164 aa)) constitute an Exonuclease domain. Y141 is a catalytic residue.

This sequence belongs to the oligoribonuclease family.

It is found in the cytoplasm. Functionally, 3'-to-5' exoribonuclease specific for small oligoribonucleotides. This Paraburkholderia xenovorans (strain LB400) protein is Oligoribonuclease.